A 115-amino-acid chain; its full sequence is U3-lycotoxin-Ls1a (115 aa).

Residues 1-20 (MKFVLLFGVLLVTLFSYSSA) form the signal peptide. A propeptide spanning residues 21–44 (EMLDDFDQAVEDELLSLIEKEEAR) is cleaved from the precursor. Disulfide bonds link cysteine 48-cysteine 63, cysteine 55-cysteine 72, cysteine 62-cysteine 87, and cysteine 74-cysteine 85.

Belongs to the neurotoxin 19 (CSTX) family. 01 subfamily. As to expression, expressed by the venom gland.

It is found in the secreted. The sequence is that of U3-lycotoxin-Ls1a from Lycosa singoriensis (Wolf spider).